A 249-amino-acid chain; its full sequence is Sesquipedalian-1 (249 aa).

Positions 17-113 (PVDNAGFLYK…WVKALSRASF (97 aa)) constitute a PH domain. Disordered stretches follow at residues 134–159 (GGMA…LAPV) and 194–219 (EATF…HGPL). The segment covering 140 to 152 (QPQPQSLPLPPSL) has biased composition (pro residues). Position 213 is a phosphoserine (Ser213). The F&amp;H signature appears at 223-235 (PFARLHECYGQEI).

Belongs to the sesquipedalian family. Forms homodimers and heterodimers with PHETA2. Interacts with OCRL and INPP5B. Interaction with OCRL may be important for endosomal morphology and function.

It localises to the early endosome. The protein resides in the recycling endosome. The protein localises to the golgi apparatus. Its subcellular location is the trans-Golgi network. It is found in the cytoplasmic vesicle. It localises to the clathrin-coated vesicle. Its function is as follows. Plays a role in endocytic trafficking. Required for receptor recycling from endosomes, both to the trans-Golgi network and the plasma membrane. In Homo sapiens (Human), this protein is Sesquipedalian-1.